The following is a 291-amino-acid chain: Pituitary-specific positive transcription factor 1 (291 aa).

A 9aaTAD motif is present at residues proline 5–isoleucine 13. The 75-residue stretch at methionine 124–glutamate 198 folds into the POU-specific domain. The homeobox DNA-binding region spans lysine 214–lysine 273.

Belongs to the POU transcription factor family. Class-1 subfamily. Interacts with PITX1. Interacts with LHX3. Interacts with ELK1.

The protein localises to the nucleus. Functionally, transcription factor involved in the specification of the lactotrope, somatotrope, and thyrotrope phenotypes in the developing anterior pituitary. Activates growth hormone and prolactin genes. Specifically binds to the consensus sequence 5'-TAAAT-3'. This Ovis aries (Sheep) protein is Pituitary-specific positive transcription factor 1 (POU1F1).